A 149-amino-acid chain; its full sequence is Calmodulin-5/6/7/8 (149 aa).

Residue alanine 2 is modified to N-acetylalanine. 4 EF-hand domains span residues 8–43, 44–79, 81–116, and 117–149; these read DQIS…LGQN, PTEA…KMKD, DSEE…LGEK, and LTDE…MMAK. Ca(2+) is bound by residues aspartate 21, aspartate 23, aspartate 25, cysteine 27, glutamate 32, aspartate 57, aspartate 59, asparagine 61, threonine 63, glutamate 68, aspartate 94, aspartate 96, asparagine 98, and glutamate 105. At lysine 116 the chain carries N6,N6,N6-trimethyllysine. Residues aspartate 130, aspartate 132, aspartate 134, glutamine 136, and glutamate 141 each coordinate Ca(2+).

It belongs to the calmodulin family. In terms of tissue distribution, high expression of PCM5 and 8 in stolon tips and stems, moderate in roots, and low in leaves. Steady-state expression of PCM6 in all the tissues tested, except in the leaves where the expression is lower.

In terms of biological role, calmodulin mediates the control of a large number of enzymes, ion channels and other proteins by Ca(2+). Among the enzymes to be stimulated by the calmodulin-Ca(2+) complex are a number of protein kinases and phosphatases. The polypeptide is Calmodulin-5/6/7/8 (PCM5) (Solanum tuberosum (Potato)).